Consider the following 349-residue polypeptide: MSLKDLINKNLSHWVAGQGPERDIVLSSRIRLARNLDTIPYPNRADKDSKEEVTKRVLDATSKQGKIKLHYIKMDDLPEVEREVLVEKHLISPAHAKAGEGKGVLLNDNETISIMINEEDHLRLQVLIPGLQLEGAWETASELDDLLEEKLDFAFSQKWGYLSACPTNVGTGLRASVMVHLPALNLTNNINKMLGAISKVGLTVRGIYGEGSEYVGNLYQISNQVTLGHTEKEIIANLKSVTSQIIEQERQARNLLLKEKEIEVRDRVNRSFGILSHAYQISSEEALRMLSNVKLGIDMGIITDVDTGVLSELMVLIRPAHLQKLEGKELTPTERDIKRAELIKTRLNM.

One can recognise a Phosphagen kinase C-terminal domain in the interval 24-252; it reads IVLSSRIRLA…SQIIEQERQA (229 aa). ATP is bound by residues 27–31, H89, R123, 174–178, and 205–210; these read SSRIR, RASVM, and RGIYGE. An RDXXRA motif of the pArg binding pocket involved in allosteric regulation motif is present at residues 335–340; sequence RDIKRA.

This sequence belongs to the ATP:guanido phosphotransferase family.

The catalysed reaction is L-arginyl-[protein] + ATP = N(omega)-phospho-L-arginyl-[protein] + ADP + H(+). Its activity is regulated as follows. Appears to be allosterically activated by the binding of pArg-containing polypeptides to the pArg-binding pocket localized in the C-terminal domain of McsB. Its function is as follows. Catalyzes the specific phosphorylation of arginine residues in proteins. The chain is Protein-arginine kinase from Halothermothrix orenii (strain H 168 / OCM 544 / DSM 9562).